Reading from the N-terminus, the 276-residue chain is Large ribosomal subunit protein uL2 (276 aa).

2 disordered regions span residues Phe38–Lys59 and Val225–Arg276. Residues Gln39 to Ile49 are compositionally biased toward polar residues. Residues Thr50–Lys59 show a composition bias toward basic residues.

It belongs to the universal ribosomal protein uL2 family. As to quaternary structure, part of the 50S ribosomal subunit. Forms a bridge to the 30S subunit in the 70S ribosome.

One of the primary rRNA binding proteins. Required for association of the 30S and 50S subunits to form the 70S ribosome, for tRNA binding and peptide bond formation. It has been suggested to have peptidyltransferase activity; this is somewhat controversial. Makes several contacts with the 16S rRNA in the 70S ribosome. The polypeptide is Large ribosomal subunit protein uL2 (Cupriavidus necator (strain ATCC 17699 / DSM 428 / KCTC 22496 / NCIMB 10442 / H16 / Stanier 337) (Ralstonia eutropha)).